The primary structure comprises 845 residues: Protein translocase subunit SecA 1 (845 aa).

Residues Q85, 103 to 107 (GEGKT), and D492 contribute to the ATP site.

Belongs to the SecA family. Monomer and homodimer. Part of the essential Sec protein translocation apparatus which comprises SecA, SecYEG and auxiliary proteins SecDF. Other proteins may also be involved.

The protein localises to the cell membrane. The protein resides in the cytoplasm. The enzyme catalyses ATP + H2O + cellular proteinSide 1 = ADP + phosphate + cellular proteinSide 2.. Part of the Sec protein translocase complex. Interacts with the SecYEG preprotein conducting channel. Has a central role in coupling the hydrolysis of ATP to the transfer of proteins into and across the cell membrane, serving as an ATP-driven molecular motor driving the stepwise translocation of polypeptide chains across the membrane. The chain is Protein translocase subunit SecA 1 from Corynebacterium glutamicum (strain ATCC 13032 / DSM 20300 / JCM 1318 / BCRC 11384 / CCUG 27702 / LMG 3730 / NBRC 12168 / NCIMB 10025 / NRRL B-2784 / 534).